A 212-amino-acid chain; its full sequence is dTTP/UTP pyrophosphatase (212 aa).

Asp88 (proton acceptor) is an active-site residue.

This sequence belongs to the Maf family. YhdE subfamily. A divalent metal cation serves as cofactor.

It localises to the cytoplasm. The catalysed reaction is dTTP + H2O = dTMP + diphosphate + H(+). It carries out the reaction UTP + H2O = UMP + diphosphate + H(+). In terms of biological role, nucleoside triphosphate pyrophosphatase that hydrolyzes dTTP and UTP. May have a dual role in cell division arrest and in preventing the incorporation of modified nucleotides into cellular nucleic acids. The chain is dTTP/UTP pyrophosphatase from Colwellia psychrerythraea (strain 34H / ATCC BAA-681) (Vibrio psychroerythus).